A 122-amino-acid chain; its full sequence is Large ribosomal subunit protein uL14 (122 aa).

The protein belongs to the universal ribosomal protein uL14 family. As to quaternary structure, part of the 50S ribosomal subunit. Forms a cluster with proteins L3 and L19. In the 70S ribosome, L14 and L19 interact and together make contacts with the 16S rRNA in bridges B5 and B8.

In terms of biological role, binds to 23S rRNA. Forms part of two intersubunit bridges in the 70S ribosome. The sequence is that of Large ribosomal subunit protein uL14 from Francisella tularensis subsp. holarctica (strain LVS).